Reading from the N-terminus, the 210-residue chain is Natriuretic peptide BM026 (210 aa).

The first 26 residues, 1–26 (MVGPSRLAGGGLLLLLLALLPVALDG), serve as a signal peptide directing secretion. The segment at 83 to 99 (CFGHKIDRISHSSGMGC) is natriuretic peptide domain 1. A disulfide bridge links C83 with C99. Basic and acidic residues predominate over residues 122-134 (ESKKSRAARDRMV). The disordered stretch occupies residues 122 to 210 (ESKKSRAARD…QFNSKSSQVA (89 aa)). Gly residues predominate over residues 140–150 (AGGGGGGGGGD). Over residues 156–176 (ELAKKDQHNNCFGRRIDRISH) the composition is skewed to basic and acidic residues. Residues 166–182 (CFGRRIDRISHSTDLGC) form a natriuretic peptide domain 2 region. C166 and C182 form a disulfide bridge. Over residues 201 to 210 (QFNSKSSQVA) the composition is skewed to polar residues.

It belongs to the natriuretic peptide family. In terms of tissue distribution, expressed by the venom gland.

It is found in the secreted. In terms of biological role, natriuretic peptide that dose-dependently induces the rapid relaxation of rat aortic strips phenylephrine-precontracted. Acts by stimulating cGMP production in a dose-dependent manner (by probably activating NPR1 and/or NPR2). May also show potent hypotensive effects. This is Natriuretic peptide BM026 from Bungarus multicinctus (Many-banded krait).